The following is a 78-amino-acid chain: Large ribosomal subunit protein bL28 (78 aa).

Belongs to the bacterial ribosomal protein bL28 family.

The sequence is that of Large ribosomal subunit protein bL28 from Corynebacterium aurimucosum (strain ATCC 700975 / DSM 44827 / CIP 107346 / CN-1) (Corynebacterium nigricans).